The following is a 247-amino-acid chain: Myelin-oligodendrocyte glycoprotein (247 aa).

The N-terminal stretch at Met-1–Ala-29 is a signal peptide. Over Gly-30 to Gly-154 the chain is Extracellular. In terms of domain architecture, Ig-like V-type spans Phe-32–Glu-145. A disulfide bridge links Cys-53 with Cys-127. N-linked (GlcNAc...) asparagine glycosylation occurs at Asn-60. The chain crosses the membrane as a helical span at residues Val-155–Phe-175. Residues Leu-176 to Thr-210 are Cytoplasmic-facing. Residues Leu-211–Leu-231 traverse the membrane as a helical segment. The Extracellular portion of the chain corresponds to His-232–Phe-247.

It belongs to the immunoglobulin superfamily. BTN/MOG family. As to quaternary structure, homodimer. May form heterodimers between the different isoforms. In terms of assembly, (Microbial infection) Interacts with rubella virus E2 glycoprotein. As to expression, found exclusively in the CNS, where it is localized on the surface of myelin and oligodendrocyte cytoplasmic membranes.

It is found in the cell membrane. Functionally, mediates homophilic cell-cell adhesion. Minor component of the myelin sheath. May be involved in completion and/or maintenance of the myelin sheath and in cell-cell communication. (Microbial infection) Acts as a receptor for rubella virus. In Homo sapiens (Human), this protein is Myelin-oligodendrocyte glycoprotein (MOG).